A 560-amino-acid chain; its full sequence is uncharacterized protein (560 aa).

The signal sequence occupies residues 1-29 (MKSALKKSVVSTSISLILASGMAAFAAHA). Ca(2+) is bound by residues Asp66, Asp67, and Ser132. Ser132 functions as the Nucleophile in the catalytic mechanism. Residue Ser132 is modified to 3-oxoalanine (Ser). The active site involves His185. 2 residues coordinate Ca(2+): Asp345 and Asn346.

It belongs to the sulfatase family. The cofactor is Ca(2+). The conversion to 3-oxoalanine (also known as C-formylglycine, FGly), of a serine or cysteine residue in prokaryotes and of a cysteine residue in eukaryotes, is critical for catalytic activity.

This is an uncharacterized protein from Escherichia coli (strain K12).